A 257-amino-acid polypeptide reads, in one-letter code: MKKIATATIATAGIATFAFAHHDAQAAEQNNDGYNPNDPYSYSYTYTIDAEGNYHYTWKGNWSPDRVNTSYNYNNYNNYNYYGYNNYSNYNNYSNYNNYNNYQSNNTQSQRTTQPTGGLGASYSTSSSNVHVTTTSAPSSNGVSLSNARSASGNLYTSGQCTYYVFDRVGGKIGSTWGNANNWANAAARSGYTVNNSPAKGAILQTSQGAYGHVAYVEGVNSNGSIRVSEMNYGHGAGVVTSRTISASQAASYNYIH.

The first 26 residues, 1–26 (MKKIATATIATAGIATFAFAHHDAQA), serve as a signal peptide directing secretion. 8 consecutive repeat copies span residues 73-75 (YNN), 76-78 (YNN), 84-86 (YNN), 87-89 (YSN), 90-92 (YNN), 93-95 (YSN), 96-98 (YNN), and 99-101 (YNN). The segment at 73–101 (YNNYNNYNYYGYNNYSNYNNYSNYNNYNN) is 8 X 3 AA repeats of Y-[NS]-N. Residues 101-144 (NYQSNNTQSQRTTQPTGGLGASYSTSSSNVHVTTTSAPSSNGVS) are disordered. Positions 107-116 (TQSQRTTQPT) are enriched in polar residues. The segment covering 122-136 (SYSTSSSNVHVTTTS) has biased composition (low complexity). The Peptidase C51 domain maps to 136-257 (SAPSSNGVSL…SQAASYNYIH (122 aa)).

The protein resides in the secreted. Functionally, not known; immunogenic protein expressed during sepsis and particularly during episodes of infective endocarditis. The chain is Staphylococcal secretory antigen SsaA (ssaA) from Staphylococcus epidermidis.